Here is a 415-residue protein sequence, read N- to C-terminus: Fructose-like permease IIC component (415 aa).

Topologically, residues 1–46 are cytoplasmic; that stretch reads MAIKKRSATVVPGASGAAAAVKNPQASKSSFWGELPQHVMSGISRM. The PTS EIIC type-2 domain occupies 35–410; it reads LPQHVMSGIS…RLMMFRKGKL (376 aa). Residues 47 to 67 form a helical membrane-spanning segment; that stretch reads VPTLIMGGVILAFSQLIAYSW. Residues 68–101 lie on the Periplasmic side of the membrane; that stretch reads LKIPAEIGIMDALNSGKFSGFDLSLLKFAWLSQS. The helical transmembrane segment at 102-122 threads the bilayer; it reads FGGVLFGFAIPMFAAFVANSI. At 123-126 the chain is on the cytoplasmic side; it reads GGKL. Residues 127–147 traverse the membrane as a helical segment; the sequence is AFPAGFIGGLMSTQPTQLLNF. Residues 148 to 157 lie on the Periplasmic side of the membrane; sequence DPSTMQWATS. The chain crosses the membrane as a helical span at residues 158-178; it reads SPVPSTFIGALIISIVAGYLV. Over 179–197 the chain is Cytoplasmic; sequence KWMNQKIQLPDFLLAFKTT. The helical transmembrane segment at 198 to 218 threads the bilayer; it reads FLLPILSAIFVMLAMYYVITP. Residues 219-237 are Periplasmic-facing; it reads FGGWINGGIRTVLTAAGEK. The helical transmembrane segment at 238–258 threads the bilayer; the sequence is GALMYAMGIAAATAIDLGGPI. The Cytoplasmic segment spans residues 259 to 276; the sequence is NKAAGFVAFSFTTDHVLP. The chain crosses the membrane as a helical span at residues 277 to 297; the sequence is VTARSIAIVIPPIGLGLATII. Topologically, residues 298 to 318 are periplasmic; sequence DRRLTGKRLFNAQLYPQGKTA. A helical transmembrane segment spans residues 319–339; the sequence is MFLAFMGISEGAIPFALESPI. Residues 340–341 lie on the Cytoplasmic side of the membrane; the sequence is TA. Residues 342-362 form a helical membrane-spanning segment; sequence IPSYMVGAIVGSTAAVWLGAV. The Periplasmic portion of the chain corresponds to 363–378; sequence QWFPESAIWAWPLVTN. A helical membrane pass occupies residues 379-399; the sequence is LGVYMAGIALGAVITALMVVF. Topologically, residues 400 to 415 are cytoplasmic; the sequence is LRLMMFRKGKLLIDSL.

Its subcellular location is the cell inner membrane. Functionally, the phosphoenolpyruvate-dependent sugar phosphotransferase system (PTS), a major carbohydrate active -transport system, catalyzes the phosphorylation of incoming sugar substrates concomitant with their translocation across the cell membrane. In Escherichia coli O157:H7, this protein is Fructose-like permease IIC component (fryC).